We begin with the raw amino-acid sequence, 431 residues long: Glucose-1-phosphate adenylyltransferase (431 aa).

Alpha-D-glucose 1-phosphate-binding positions include Y109, G175, 190–191 (EK), and S208.

The protein belongs to the bacterial/plant glucose-1-phosphate adenylyltransferase family. In terms of assembly, homotetramer.

It carries out the reaction alpha-D-glucose 1-phosphate + ATP + H(+) = ADP-alpha-D-glucose + diphosphate. It functions in the pathway glycan biosynthesis; glycogen biosynthesis. Functionally, involved in the biosynthesis of ADP-glucose, a building block required for the elongation reactions to produce glycogen. Catalyzes the reaction between ATP and alpha-D-glucose 1-phosphate (G1P) to produce pyrophosphate and ADP-Glc. This is Glucose-1-phosphate adenylyltransferase from Alteromonas mediterranea (strain DSM 17117 / CIP 110805 / LMG 28347 / Deep ecotype).